A 121-amino-acid chain; its full sequence is Large ribosomal subunit protein bL12 (121 aa).

It belongs to the bacterial ribosomal protein bL12 family. Homodimer. Part of the ribosomal stalk of the 50S ribosomal subunit. Forms a multimeric L10(L12)X complex, where L10 forms an elongated spine to which 2 to 4 L12 dimers bind in a sequential fashion. Binds GTP-bound translation factors.

Functionally, forms part of the ribosomal stalk which helps the ribosome interact with GTP-bound translation factors. Is thus essential for accurate translation. The polypeptide is Large ribosomal subunit protein bL12 (Tolumonas auensis (strain DSM 9187 / NBRC 110442 / TA 4)).